A 642-amino-acid chain; its full sequence is MKETAQEYKVSAVIPTLLKNWILRVVYATLDHIPPFVWEILHVITDIYFFWVQKLINYVRPHSRVIYYNAIKKLDECDTYQMWCQQASVVDEITGANLWRRNFFSRRYDFNSVIEQYSILENMLREEKYDVVKEKFSTTGPCMLRNFAGIGDKKLFTKSLMGTKLLIEQYLTRILEGLDILNNQTLTPTSFFQRCKLSLGTTALILQGGSLFGLFHLGVIRGLLLQDLMPNIISGSSMGACVASLFGCLSNEQLKQLLTDDNLLNIIKNDVDLLKSCGYGNLEQHLNLGTLIQNLIHHGYSQDVYLFIRFVMKYIVKEKTFEEVYQITGKVFNIVIHPTDKSCPNLLNYVTTPNVLIKSAIECSLGSGVISEDTSLLCKNLENEIEPFLNINKNKQVKFLTPENANNPSITESPYTRLTELFNVNNFIVSLARPYLAPLVVNDLKHEIKTSKYYYYKHYPNMPPINANTVRKTQRSSSQSPIKAGTVEDLEPEPLMSPVPPSSAVNDSAEYIIPELGIPQLNFTEMEPLAFKFKYHLERKLKNIATMEFRHRMEVLDNLGLLCSLIKRLIIDEKTPRSATEIAVVPRMKSLSLTRIIEGQLNNIPYWIKSGERSTWPALALIKTRCAVEFKLDDIIRARRSR.

One can recognise a PNPLA domain in the interval 204 to 392 (LILQGGSLFG…NEIEPFLNIN (189 aa)). The short motif at 235 to 239 (GSSMG) is the GXSXG element. The Nucleophile role is filled by S237. An HXXXXD acyltransferase motif motif is present at residues 298–303 (HGYSQD). E403 acts as the Proton acceptor in catalysis. A compositionally biased stretch (polar residues) spans 471-481 (RKTQRSSSQSP). The segment at 471-502 (RKTQRSSSQSPIKAGTVEDLEPEPLMSPVPPS) is disordered.

The protein localises to the lipid droplet. The enzyme catalyses a triacylglycerol + H2O = a diacylglycerol + a fatty acid + H(+). It carries out the reaction 1,2,3-tri-(9Z-octadecenoyl)-glycerol + H2O = di-(9Z)-octadecenoylglycerol + (9Z)-octadecenoate + H(+). It catalyses the reaction di-(9Z)-octadecenoylglycerol + H2O = (9Z-octadecenoyl)-glycerol + (9Z)-octadecenoate + H(+). The catalysed reaction is a 1-acyl-sn-glycero-3-phosphoethanolamine + (9Z)-octadecenoyl-CoA = 1-acyl-2-(9Z)-octadecenoyl-sn-glycero-3-phosphoethanolamine + CoA. The enzyme catalyses a 1-acyl-sn-glycero-3-phosphoethanolamine + hexadecanoyl-CoA = 1-acyl-2-hexadecanoyl-sn-glycero-3-phosphoethanolamine + CoA. Its activity is regulated as follows. Loses its lipolytic activity in cells lacking nonpolar lipids. Its function is as follows. Lipid particle-localized triacylglycerol (TAG) lipase. The lipid droplet/particle is a lipid storage compartment which serves as a depot of energy and building blocks for membrane lipid biosynthesis. Involved in the mobilization of the non-polar storage lipids triacylglycerols (TAGs) from lipid particles by hydrolysis of TAGs, releasing and supplying specific fatty acids to the appropriate metabolic pathways. Also catalyzes the acylation of lysophosphatidic acid (LPA). Important for efficient sporulation, but rather through its acyltransferase than lipase activity. This is Triacylglycerol lipase 3 (TGL3) from Saccharomyces cerevisiae (strain ATCC 204508 / S288c) (Baker's yeast).